The chain runs to 287 residues: Probable ketose 3-epimerase (287 aa).

E152 (proton donor/acceptor) is an active-site residue. E152 and D185 together coordinate Mn(2+). Residue H188 participates in substrate binding. H211 serves as a coordination point for Mn(2+). R217 provides a ligand contact to substrate. E246 serves as the catalytic Proton donor/acceptor. E246 contacts Mn(2+).

It belongs to the hyi family. Mn(2+) is required as a cofactor.

Probably catalyzes the epimerization of ketopentoses and/or ketohexoses at the C3 position. This chain is Probable ketose 3-epimerase, found in Synechocystis sp. (strain ATCC 27184 / PCC 6803 / Kazusa).